The following is a 466-amino-acid chain: cAMP-dependent protein kinase regulatory subunit (466 aa).

The dimerization and phosphorylation stretch occupies residues 25-231 (QFAANYFTKR…RLEKAVGKNF (207 aa)). Residues 71–80 (ASLSHGSSKA) show a composition bias toward low complexity. Disordered regions lie at residues 71-90 (ASLS…ISSS), 109-139 (STHI…PGIF), 154-179 (NSSV…VVNP), and 193-218 (SVSG…KSPE). Over residues 81-90 (NASQSGISSS) the composition is skewed to polar residues. Basic and acidic residues predominate over residues 109 to 118 (STHIVDHLDS). Residue serine 193 is modified to Phosphoserine. Basic and acidic residues predominate over residues 200-218 (QPDHLDDWKPENFQEKSPE). 3',5'-cyclic AMP-binding positions include 232-347 (LFNK…LLKN), glutamate 297, arginine 306, 350-466 (ILKS…RSKH), glutamate 416, and arginine 425.

The protein belongs to the cAMP-dependent kinase regulatory chain family. Tetramer, composed of 2 regulatory (R) and 2 catalytic (C) subunits. In the presence of cAMP it dissociates into 2 active monomeric C subunits and an R dimer.

In Kluyveromyces lactis (strain ATCC 8585 / CBS 2359 / DSM 70799 / NBRC 1267 / NRRL Y-1140 / WM37) (Yeast), this protein is cAMP-dependent protein kinase regulatory subunit (PKAR).